Consider the following 350-residue polypeptide: Biotin synthase (350 aa).

In terms of domain architecture, Radical SAM core spans 38–262 (RQVQVSTLLS…MMPTSYVRLS (225 aa)). Residues Cys53, Cys57, and Cys60 each coordinate [4Fe-4S] cluster. The [2Fe-2S] cluster site is built by Cys97, Cys128, Cys188, and Arg260.

Belongs to the radical SAM superfamily. Biotin synthase family. Homodimer. [4Fe-4S] cluster serves as cofactor. [2Fe-2S] cluster is required as a cofactor.

The catalysed reaction is (4R,5S)-dethiobiotin + (sulfur carrier)-SH + 2 reduced [2Fe-2S]-[ferredoxin] + 2 S-adenosyl-L-methionine = (sulfur carrier)-H + biotin + 2 5'-deoxyadenosine + 2 L-methionine + 2 oxidized [2Fe-2S]-[ferredoxin]. Its pathway is cofactor biosynthesis; biotin biosynthesis; biotin from 7,8-diaminononanoate: step 2/2. Its function is as follows. Catalyzes the conversion of dethiobiotin (DTB) to biotin by the insertion of a sulfur atom into dethiobiotin via a radical-based mechanism. In Yersinia enterocolitica serotype O:8 / biotype 1B (strain NCTC 13174 / 8081), this protein is Biotin synthase.